The chain runs to 490 residues: N-succinylglutamate 5-semialdehyde dehydrogenase (490 aa).

224-229 provides a ligand contact to NAD(+); the sequence is GSSPTG. Residues Glu-247 and Cys-281 contribute to the active site.

Belongs to the aldehyde dehydrogenase family. AstD subfamily.

It carries out the reaction N-succinyl-L-glutamate 5-semialdehyde + NAD(+) + H2O = N-succinyl-L-glutamate + NADH + 2 H(+). It participates in amino-acid degradation; L-arginine degradation via AST pathway; L-glutamate and succinate from L-arginine: step 4/5. In terms of biological role, catalyzes the NAD-dependent reduction of succinylglutamate semialdehyde into succinylglutamate. In Hahella chejuensis (strain KCTC 2396), this protein is N-succinylglutamate 5-semialdehyde dehydrogenase.